We begin with the raw amino-acid sequence, 452 residues long: Pup--protein ligase (452 aa).

E9 provides a ligand contact to Mg(2+). Position 53 (R53) interacts with ATP. Residue Y55 coordinates Mg(2+). D57 (proton acceptor) is an active-site residue. E63 contacts Mg(2+). Residues T66 and W419 each coordinate ATP.

Belongs to the Pup ligase/Pup deamidase family. Pup-conjugating enzyme subfamily.

It carries out the reaction ATP + [prokaryotic ubiquitin-like protein]-L-glutamate + [protein]-L-lysine = ADP + phosphate + N(6)-([prokaryotic ubiquitin-like protein]-gamma-L-glutamyl)-[protein]-L-lysine.. It functions in the pathway protein degradation; proteasomal Pup-dependent pathway. Its pathway is protein modification; protein pupylation. Functionally, catalyzes the covalent attachment of the prokaryotic ubiquitin-like protein modifier Pup to the proteasomal substrate proteins, thereby targeting them for proteasomal degradation. This tagging system is termed pupylation. The ligation reaction involves the side-chain carboxylate of the C-terminal glutamate of Pup and the side-chain amino group of a substrate lysine. The polypeptide is Pup--protein ligase (Saccharomonospora viridis (strain ATCC 15386 / DSM 43017 / JCM 3036 / CCUG 5913 / NBRC 12207 / NCIMB 9602 / P101) (Thermoactinomyces viridis)).